A 433-amino-acid polypeptide reads, in one-letter code: Protein translocase subunit SecD (433 aa).

A run of 6 helical transmembrane segments spans residues 7 to 27 (LAFL…GPKI), 257 to 277 (LIAG…AYRM), 278 to 298 (AGLI…LTFA), 300 to 320 (LHVV…GIAV), 354 to 374 (TIVD…IFGG), and 380 to 400 (GFAV…VLFA).

The protein belongs to the SecD/SecF family. SecD subfamily. In terms of assembly, forms a complex with SecF. Part of the essential Sec protein translocation apparatus which comprises SecA, SecYEG and auxiliary proteins SecDF. Other proteins may also be involved.

The protein localises to the cell membrane. In terms of biological role, part of the Sec protein translocase complex. Interacts with the SecYEG preprotein conducting channel. SecDF uses the proton motive force (PMF) to complete protein translocation after the ATP-dependent function of SecA. This chain is Protein translocase subunit SecD, found in Alicyclobacillus acidocaldarius subsp. acidocaldarius (strain ATCC 27009 / DSM 446 / BCRC 14685 / JCM 5260 / KCTC 1825 / NBRC 15652 / NCIMB 11725 / NRRL B-14509 / 104-IA) (Bacillus acidocaldarius).